Reading from the N-terminus, the 86-residue chain is RNA-binding protein Hfq (86 aa).

Residues 9–68 enclose the Sm domain; that stretch reads DPFLNALRRERIPVSIYLVNGIKLQGQIESFDQFVILLKNTVNQMVYKHAISTVVPARPV. The interval 65–86 is disordered; sequence ARPVSHHSGERGSDRPSEKSED. Residues 71–86 are compositionally biased toward basic and acidic residues; the sequence is HSGERGSDRPSEKSED.

Belongs to the Hfq family. As to quaternary structure, homohexamer.

RNA chaperone that binds small regulatory RNA (sRNAs) and mRNAs to facilitate mRNA translational regulation in response to envelope stress, environmental stress and changes in metabolite concentrations. Also binds with high specificity to tRNAs. This chain is RNA-binding protein Hfq, found in Vibrio vulnificus (strain YJ016).